Consider the following 182-residue polypeptide: Putative colanic acid biosynthesis acetyltransferase WcaF (182 aa).

The protein belongs to the transferase hexapeptide repeat family.

It participates in slime biogenesis; slime polysaccharide biosynthesis. The chain is Putative colanic acid biosynthesis acetyltransferase WcaF (wcaF) from Shigella flexneri.